The chain runs to 106 residues: Probable glutaredoxin (106 aa).

Positions 8 to 106 (IVQKITGADP…AKYLDVQFTQ (99 aa)) constitute a Glutaredoxin domain. A disulfide bond links Cys28 and Cys31.

It belongs to the glutaredoxin family.

The protein resides in the virion. This Acanthamoeba polyphaga mimivirus (APMV) protein is Probable glutaredoxin.